The primary structure comprises 188 residues: Meiotically up-regulated gene 94 protein (188 aa).

The protein resides in the cytoplasm. It is found in the nucleus. Has a role in meiosis. This is Meiotically up-regulated gene 94 protein (mug94) from Schizosaccharomyces pombe (strain 972 / ATCC 24843) (Fission yeast).